The chain runs to 1070 residues: DNA-directed RNA polymerase subunit beta (1070 aa).

Belongs to the RNA polymerase beta chain family. As to quaternary structure, in plastids the minimal PEP RNA polymerase catalytic core is composed of four subunits: alpha, beta, beta', and beta''. When a (nuclear-encoded) sigma factor is associated with the core the holoenzyme is formed, which can initiate transcription.

It localises to the plastid. The protein resides in the chloroplast. It carries out the reaction RNA(n) + a ribonucleoside 5'-triphosphate = RNA(n+1) + diphosphate. Its function is as follows. DNA-dependent RNA polymerase catalyzes the transcription of DNA into RNA using the four ribonucleoside triphosphates as substrates. In Liriodendron tulipifera (Tuliptree), this protein is DNA-directed RNA polymerase subunit beta.